The following is a 350-amino-acid chain: Eukaryotic translation initiation factor 3 subunit I (350 aa).

6 WD repeats span residues 8–49 (GHER…GTLE), 51–89 (HQGV…CVYT), 91–135 (NSPS…ASLT), 149–190 (QNGS…KSLQ), 198–240 (EKNV…KVYK), and 296–335 (GHFG…KDFL).

Belongs to the eIF-3 subunit I family. As to quaternary structure, component of the eukaryotic translation initiation factor 3 (eIF-3) complex.

The protein resides in the cytoplasm. Component of the eukaryotic translation initiation factor 3 (eIF-3) complex, which is involved in protein synthesis of a specialized repertoire of mRNAs and, together with other initiation factors, stimulates binding of mRNA and methionyl-tRNAi to the 40S ribosome. The eIF-3 complex specifically targets and initiates translation of a subset of mRNAs involved in cell proliferation. This Lodderomyces elongisporus (strain ATCC 11503 / CBS 2605 / JCM 1781 / NBRC 1676 / NRRL YB-4239) (Yeast) protein is Eukaryotic translation initiation factor 3 subunit I.